Consider the following 347-residue polypeptide: Holliday junction branch migration complex subunit RuvB (347 aa).

The large ATPase domain (RuvB-L) stretch occupies residues 1–186 (MKDENSINFL…FGITARFELY (186 aa)). ATP-binding positions include L25, R26, G67, K70, T71, T72, 133 to 135 (EDY), R176, Y186, and R223. Mg(2+) is bound at residue T71. Residues 187-257 (SEIELVEIIK…IVAIGLEMLR (71 aa)) are small ATPAse domain (RuvB-S). The segment at 260 to 347 (GEGLDEQDRN…NLNENQRVSF (88 aa)) is head domain (RuvB-H). DNA-binding residues include R315 and R320.

The protein belongs to the RuvB family. In terms of assembly, homohexamer. Forms an RuvA(8)-RuvB(12)-Holliday junction (HJ) complex. HJ DNA is sandwiched between 2 RuvA tetramers; dsDNA enters through RuvA and exits via RuvB. An RuvB hexamer assembles on each DNA strand where it exits the tetramer. Each RuvB hexamer is contacted by two RuvA subunits (via domain III) on 2 adjacent RuvB subunits; this complex drives branch migration. In the full resolvosome a probable DNA-RuvA(4)-RuvB(12)-RuvC(2) complex forms which resolves the HJ.

The protein localises to the cytoplasm. The catalysed reaction is ATP + H2O = ADP + phosphate + H(+). In terms of biological role, the RuvA-RuvB-RuvC complex processes Holliday junction (HJ) DNA during genetic recombination and DNA repair, while the RuvA-RuvB complex plays an important role in the rescue of blocked DNA replication forks via replication fork reversal (RFR). RuvA specifically binds to HJ cruciform DNA, conferring on it an open structure. The RuvB hexamer acts as an ATP-dependent pump, pulling dsDNA into and through the RuvAB complex. RuvB forms 2 homohexamers on either side of HJ DNA bound by 1 or 2 RuvA tetramers; 4 subunits per hexamer contact DNA at a time. Coordinated motions by a converter formed by DNA-disengaged RuvB subunits stimulates ATP hydrolysis and nucleotide exchange. Immobilization of the converter enables RuvB to convert the ATP-contained energy into a lever motion, pulling 2 nucleotides of DNA out of the RuvA tetramer per ATP hydrolyzed, thus driving DNA branch migration. The RuvB motors rotate together with the DNA substrate, which together with the progressing nucleotide cycle form the mechanistic basis for DNA recombination by continuous HJ branch migration. Branch migration allows RuvC to scan DNA until it finds its consensus sequence, where it cleaves and resolves cruciform DNA. The polypeptide is Holliday junction branch migration complex subunit RuvB (Borreliella afzelii (strain PKo) (Borrelia afzelii)).